The following is a 156-amino-acid chain: Ribosomal RNA large subunit methyltransferase H (156 aa).

Residues Leu-73, Gly-104, and 123 to 128 each bind S-adenosyl-L-methionine; that span reads LSALTL.

This sequence belongs to the RNA methyltransferase RlmH family. In terms of assembly, homodimer.

It localises to the cytoplasm. It carries out the reaction pseudouridine(1915) in 23S rRNA + S-adenosyl-L-methionine = N(3)-methylpseudouridine(1915) in 23S rRNA + S-adenosyl-L-homocysteine + H(+). Functionally, specifically methylates the pseudouridine at position 1915 (m3Psi1915) in 23S rRNA. This is Ribosomal RNA large subunit methyltransferase H from Vibrio parahaemolyticus serotype O3:K6 (strain RIMD 2210633).